Consider the following 118-residue polypeptide: T cell receptor gamma variable 5 (118 aa).

A signal peptide spans Met1–Gln17. The Ig-like domain maps to Lys18–Arg118. An intrachain disulfide couples Cys41 to Cys113. An N-linked (GlcNAc...) asparagine glycan is attached at Asn106.

Gamma-delta TR is a heterodimer composed of a gamma and delta chain; disulfide-linked. The gamma-delta TR is associated with the transmembrane signaling CD3 coreceptor proteins following the stoichiometry: a single gamma-delta TR heterodimer associates with one CD3D-CD3E heterodimer, one CD3G-CD3E heterodimer and one CD247 homodimer forming a stable octameric structure. Upon activation, gamma-delta TR complex associates with FCER1G to initiate intracellular signaling.

Its subcellular location is the cell membrane. V region of the variable domain of T cell receptor (TR) gamma chain that participates in the antigen recognition. Gamma-delta TRs recognize a variety of self and foreign non-peptide antigens frequently expressed at the epithelial boundaries between the host and external environment, including endogenous lipids presented by MH-like protein CD1D and phosphoantigens presented by butyrophilin-like molecule BTN3A1. Upon antigen recognition induces rapid, innate-like immune responses involved in pathogen clearance and tissue repair. Binding of gamma-delta TR complex to antigen triggers phosphorylation of immunoreceptor tyrosine-based activation motifs (ITAMs) in the CD3 chains by the LCK and FYN kinases, allowing the recruitment, phosphorylation, and activation of ZAP70 that facilitates phosphorylation of the scaffolding proteins LCP2 and LAT. This lead to the formation of a supramolecular signalosome that recruits the phospholipase PLCG1, resulting in calcium mobilization and ERK activation, ultimately leading to T cell expansion and differentiation into effector cells. Gamma-delta TRs are produced through somatic rearrangement of a limited repertoire of variable (V), diversity (D), and joining (J) genes. The potential diversity of gamma-delta TRs is conferred by the unique ability to rearrange (D) genes in tandem and to utilize all three reading frames. The combinatorial diversity is considerably increased by the sequence exonuclease trimming and random nucleotide (N) region additions which occur during the V-(D)-J rearrangements. The chain is T cell receptor gamma variable 5 from Homo sapiens (Human).